The following is a 62-amino-acid chain: Large ribosomal subunit protein bL28 (62 aa).

The disordered stretch occupies residues Met1–Arg27. Residues Arg10 to Arg27 are compositionally biased toward basic residues.

It belongs to the bacterial ribosomal protein bL28 family.

The protein is Large ribosomal subunit protein bL28 of Shouchella clausii (strain KSM-K16) (Alkalihalobacillus clausii).